We begin with the raw amino-acid sequence, 213 residues long: 3-isopropylmalate dehydratase small subunit (213 aa).

The protein belongs to the LeuD family. LeuD type 1 subfamily. As to quaternary structure, heterodimer of LeuC and LeuD.

The catalysed reaction is (2R,3S)-3-isopropylmalate = (2S)-2-isopropylmalate. It participates in amino-acid biosynthesis; L-leucine biosynthesis; L-leucine from 3-methyl-2-oxobutanoate: step 2/4. In terms of biological role, catalyzes the isomerization between 2-isopropylmalate and 3-isopropylmalate, via the formation of 2-isopropylmaleate. The protein is 3-isopropylmalate dehydratase small subunit of Neisseria meningitidis serogroup C / serotype 2a (strain ATCC 700532 / DSM 15464 / FAM18).